The following is a 734-amino-acid chain: MSASEAGVTEQVKKLSVKDSSNDAVKPNKKENKKSKQQSLYLDPEPTFIEERIEMFDRLQKEYNDKVASMPRVPLKIVLKDGAVKEATSWETTPMDIAKGISKSLADRLCISKVNGQLWDLDRPFEGEANEEIKLELLDFESDEGKKVFWHSSAHVLGESCECHLGAHICLGPPTDDGFFYEMAVRDSMKDISESPERTVSQADFPGLEGVAKNVIKQKQKFERLVMSKEDLLKMFHYSKYKTYLVQTKVPDGGATTVYRCGKLIDLCVGPHIPHTGRIKAFKLLKNSSCYFLGDATNDSLQRVYGISFPDKKLMDAHLKFLAEASMRDHRKIGKEQELFLFNEMSPGSCFWLPHGTRIYNTLVDLLRTEYRKRGYEEVITPNMYNSKLWETSGHWANYKENMFTFEVEKETFGLKPMNCPGHCLMFKSRERSYRELPWRVADFGVIHRNEFSGALSGLTRVRRFQQDDAHIFCTHDQIESEIENIFNFLQYIYGVFGFEFKMELSTRPEKYVGKIETWDAAESKLESALKKWGGNWEINAGDGAFYGPKIDIMISDALRRWHQCATIQLDFQLPNRFELEFKSKDQDSESYERPVMIHRAILGSVERMTAILTEHFAGKWPFWLSPRQVLVVPVGVKYQGYAEDVRNKLHDAGFYADVDLTGNTLQKKVRNGQMLKYNFIFIVGEQEMNEKSVNIRNRDVMEQQGKNATVSVEEVLKQLRNLKDEKRGDNVLA.

Positions 1 to 41 (MSASEAGVTEQVKKLSVKDSSNDAVKPNKKENKKSKQQSLY) are disordered. The segment covering 11–30 (QVKKLSVKDSSNDAVKPNKK) has biased composition (basic and acidic residues). One can recognise a TGS domain in the interval 69–135 (SMPRVPLKIV…EGEANEEIKL (67 aa)). Phosphoserine occurs at positions 195 and 289. Phosphothreonine occurs at positions 297 and 381. Serine 453 and serine 457 each carry phosphoserine. Threonine 460 carries the post-translational modification Phosphothreonine. Serine 605 carries the phosphoserine modification.

This sequence belongs to the class-II aminoacyl-tRNA synthetase family.

Its subcellular location is the cytoplasm. The enzyme catalyses tRNA(Thr) + L-threonine + ATP = L-threonyl-tRNA(Thr) + AMP + diphosphate + H(+). In Saccharomyces cerevisiae (strain ATCC 204508 / S288c) (Baker's yeast), this protein is Threonine--tRNA ligase, cytoplasmic (THS1).